We begin with the raw amino-acid sequence, 102 residues long: Small ribosomal subunit protein uS10 (102 aa).

It belongs to the universal ribosomal protein uS10 family. Part of the 30S ribosomal subunit.

Its function is as follows. Involved in the binding of tRNA to the ribosomes. This is Small ribosomal subunit protein uS10 from Kosmotoga olearia (strain ATCC BAA-1733 / DSM 21960 / TBF 19.5.1).